We begin with the raw amino-acid sequence, 127 residues long: Small integral membrane protein 33 (127 aa).

A glycan (N-linked (GlcNAc...) asparagine) is linked at Asn15. A helical transmembrane segment spans residues 38–58; that stretch reads PLLAAIIAAFVLLAICIVLAV.

The protein localises to the membrane. This Mus musculus (Mouse) protein is Small integral membrane protein 33.